Reading from the N-terminus, the 374-residue chain is Dispase autolysis-inducing protein (374 aa).

An N-terminal signal peptide occupies residues 1–26 (MKRMGWAVTAAVTTIVLAQSSLAAQA).

The protein resides in the secreted. Functionally, induces autolysis of dispase and thermolysin. This chain is Dispase autolysis-inducing protein (daip), found in Streptomyces mobaraensis (Streptoverticillium mobaraense).